The chain runs to 406 residues: LIM/homeobox protein Lhx2 (406 aa).

LIM zinc-binding domains follow at residues cysteine 53–aspartate 105 and cysteine 115–histidine 168. The interval aspartate 250 to arginine 270 is disordered. The homeobox DNA-binding region spans threonine 266 to leucine 325. The Nuclear localization signal signature appears at lysine 307–arginine 323. Polar residues predominate over residues glutamine 328–alanine 356. Disordered stretches follow at residues glutamine 328–leucine 375 and glycine 387–phenylalanine 406. Residues serine 357–leucine 375 are compositionally biased toward low complexity. A compositionally biased stretch (polar residues) spans serine 396–phenylalanine 406.

As to quaternary structure, interacts (via LIM domains) with CITED2. Interacts with POU4F2 isoform 1.

It is found in the nucleus. In terms of biological role, acts as a transcriptional activator. Stimulates the promoter of the alpha-glycoprotein gene. Transcriptional regulatory protein involved in the control of cell differentiation in developing lymphoid and neural cell types. This chain is LIM/homeobox protein Lhx2 (Lhx2), found in Mus musculus (Mouse).